A 2726-amino-acid polypeptide reads, in one-letter code: Filamin-C (2726 aa).

The interval 1 to 260 (MMNNSNYSDA…VMTYLSQFPK (260 aa)) is actin-binding. S5 carries the phosphoserine modification. Calponin-homology (CH) domains follow at residues 37–143 (KIQQ…LHYS) and 160–263 (QTPK…KAKL). Filamin repeat units lie at residues 271-369 (SKQL…EVNV), 371-469 (MALG…PVHV), 470-566 (AEAC…EVQV), 567-659 (SPEA…IAHI), 663-759 (PPDC…RVNV), 760-862 (GEGS…HIKV), 863-961 (DPSH…VVNV), 962-1057 (APPL…AVEG), 1058-1150 (VLPP…KATI), 1151-1245 (QPVF…RVHV), 1246-1345 (QPAV…RVGV), 1346-1438 (TEGC…RVPV), 1439-1534 (KDVV…KIKV), 1535-1631 (LPAH…RIHA), and 1636-1735 (DASK…HVLA). The residue at position 1003 (R1003) is an Omega-N-methylarginine. Residues S1162 and S1339 each carry the phosphoserine modification. Residues 1736–1759 (CDPLPHVEEPAEVLQLHQPYAPLR) form a hinge 1 region. Filamin repeat units lie at residues 1760 to 1854 (PGTC…LQFY), 1855 to 1947 (VDAI…TAKI), 1948 to 2034 (TGDD…KILV), and 2037 to 2129 (SEIG…TVKV). S2043 carries the phosphoserine modification. The tract at residues 2163–2244 (GNWFQMVSAQ…FGSITRQQEG (82 aa)) is intradomain insert; mediate targeting to Z lines. The span at 2194–2210 (ISKTRGGETKREVRVEE) shows a compositional bias: basic and acidic residues. The disordered stretch occupies residues 2194–2214 (ISKTRGGETKREVRVEESTQV). A phosphoserine mark is found at S2234 and S2237. Residue T2239 is modified to Phosphothreonine. Residues 2241-2260 (QQEGEASSQDMTAQVTSPSG) are compositionally biased toward polar residues. Positions 2241–2261 (QQEGEASSQDMTAQVTSPSGK) are disordered. Residues 2245-2307 (EASSQDMTAQ…VPGSPFQFTV (63 aa)) form a Filamin 20; mediates interaction with XIRP1 repeat. Filamin repeat units follow at residues 2310–2402 (LGEG…VVPV), 2404–2497 (SLSD…KIRV), and 2501–2593 (SQAG…KAKV). The interval 2404-2725 (SLSDDARRLT…VPGSPFKVNV (322 aa)) is interaction with INPPL1. 6 positions are modified to phosphoserine: S2587, S2618, S2621, S2633, S2715, and S2719. Positions 2594–2630 (TGPRLSGGHSLHETSTVLVETVTKSSSSRGASYSSIP) are hinge 2. A self-association site, tail region spans residues 2594–2726 (TGPRLSGGHS…PGSPFKVNVP (133 aa)). A Filamin 24 repeat occupies 2631–2725 (KFSSDASKVV…VPGSPFKVNV (95 aa)).

Belongs to the filamin family. As to quaternary structure, homodimer; the filamin repeat 24 and the second hinge domain are important for dimer formation. Interacts with FLNB, KCND2, INPPL1, ITGB1A, MYOT, MYOZ1 and MYOZ3. Interacts with sarcoglycans SGCD and SGCG. Interacts (via filament repeats 17-18, 20-21 and 24) with USP25 (isoform USP25m only). Interacts with FBLIM1. Interacts with KY. Interacts with IGFN1. Interacts with MICALL2. Interacts with XIRP1; this interaction is mediated by filamin 20 repeat. Interacts with ANK3. Interacts with SYNPO2. In terms of processing, ubiquitinated by FBXL22, leading to proteasomal degradation.

It is found in the cytoplasm. The protein localises to the membrane. Its subcellular location is the cytoskeleton. The protein resides in the myofibril. It localises to the sarcomere. It is found in the z line. Its function is as follows. Muscle-specific filamin, which plays a central role in sarcomere assembly and organization. Critical for normal myogenesis, it probably functions as a large actin-cross-linking protein with structural functions at the Z lines in muscle cells. May be involved in reorganizing the actin cytoskeleton in response to signaling events. This chain is Filamin-C (Flnc), found in Rattus norvegicus (Rat).